We begin with the raw amino-acid sequence, 408 residues long: UDP-N-acetylglucosamine--dolichyl-phosphate N-acetylglucosaminephosphotransferase (408 aa).

Residues 1–10 (MWAFPELPMP) are Lumenal-facing. The chain crosses the membrane as a helical span at residues 11–38 (LLVNLIGSLMGFVATVTLIPAFRGHFIA). At 39 to 58 (ARLCGQDLNKSSREQIPESQ) the chain is on the cytoplasmic side. UDP-N-acetyl-alpha-D-glucosamine is bound by residues 44-46 (QDL) and Glu-56. Residues 59–78 (GVISGAVFLIILFCFIPFPF) traverse the membrane as a helical segment. Residues 79–91 (LNCFVEQQCKAFP) are Lumenal-facing. The helical transmembrane segment at 92–118 (HHEFVALIGALLAICCMIFLGFADDVL) threads the bilayer. Over 119–121 (NLR) the chain is Cytoplasmic. A helical membrane pass occupies residues 122 to 143 (WRHKLLLPTAASLPLLMVYFTN). Lys-125 provides a ligand contact to dolichyl phosphate. At 144-166 (FGNTTIVVPKPLRPILGLHLDLG) the chain is on the lumenal side. The N-linked (GlcNAc...) asparagine glycan is linked to Asn-146. A helical transmembrane segment spans residues 167–186 (ILYYVYMGLLAVFCTNAINI). Position 178-186 (178-186 (VFCTNAINI)) interacts with dolichyl phosphate. Position 185 (Asn-185) interacts with Mg(2+). Residues 187-192 (LAGING) lie on the Cytoplasmic side of the membrane. Asn-191 is a binding site for UDP-N-acetyl-alpha-D-glucosamine. Residues 193-213 (LEAGQSLVISASIIVFNLVEL) form a helical membrane-spanning segment. At 214 to 218 (DGDYR) the chain is on the lumenal side. The helical transmembrane segment at 219 to 242 (DDHIFSLYFMIPFFFTTLGLLYHN) threads the bilayer. Over 243–250 (WYPSRVFV) the chain is Cytoplasmic. A helical membrane pass occupies residues 251–269 (GDTFCYFAGMTFAVVGILG). Asp-252 serves as a coordination point for Mg(2+). Residues 270-271 (HF) lie on the Lumenal side of the membrane. The chain crosses the membrane as a helical span at residues 272 to 293 (SKTMLLFFMPQVFNFLYSLPQL). Over 294-375 (LHIIPCPRHR…LLLKVFGPMH (82 aa)) the chain is Cytoplasmic. 301-303 (RHR) contributes to the UDP-N-acetyl-alpha-D-glucosamine binding site. Residues 376 to 400 (ERNLTLLLLLLQVVGSAVTFSIRYQ) form a helical membrane-spanning segment. Residues 401 to 408 (LVRLFYDV) are Lumenal-facing.

The protein belongs to the glycosyltransferase 4 family. As to quaternary structure, homodimer. Mg(2+) serves as cofactor.

It is found in the endoplasmic reticulum membrane. The enzyme catalyses a di-trans,poly-cis-dolichyl phosphate + UDP-N-acetyl-alpha-D-glucosamine = an N-acetyl-alpha-D-glucosaminyl-diphospho-di-trans,poly-cis-dolichol + UMP. It participates in protein modification; protein glycosylation. Inhibited by natural nucleoside antibiotic tunicamycin, which acts as a structural analog and competitor of UDP-GlcNAc. Activated by Man-P-Dol. Activated by manganese. Inhibited by diumycin. UDP-N-acetylglucosamine--dolichyl-phosphate N-acetylglucosaminephosphotransferase that operates in the biosynthetic pathway of dolichol-linked oligosaccharides, the glycan precursors employed in protein asparagine (N)-glycosylation. The assembly of dolichol-linked oligosaccharides begins on the cytosolic side of the endoplasmic reticulum membrane and finishes in its lumen. The sequential addition of sugars to dolichol pyrophosphate produces dolichol-linked oligosaccharides containing fourteen sugars, including two GlcNAcs, nine mannoses and three glucoses. Once assembled, the oligosaccharide is transferred from the lipid to nascent proteins by oligosaccharyltransferases. Catalyzes the initial step of dolichol-linked oligosaccharide biosynthesis, transfering GlcNAc-1-P from cytosolic UDP-GlcNAc onto the carrier lipid dolichyl phosphate (P-dolichol), yielding GlcNAc-P-P-dolichol embedded in the cytoplasmic leaflet of the endoplasmic reticulum membrane. The chain is UDP-N-acetylglucosamine--dolichyl-phosphate N-acetylglucosaminephosphotransferase from Bos taurus (Bovine).